Consider the following 332-residue polypeptide: L-lactate dehydrogenase A chain (332 aa).

NAD(+) contacts are provided by residues 29–57 and Arg-99; that span reads GAVG…IEDK. Residues Arg-106, Asn-138, and Arg-169 each contribute to the substrate site. Asn-138 provides a ligand contact to NAD(+). His-193 serves as the catalytic Proton acceptor. Thr-248 serves as a coordination point for substrate.

Belongs to the LDH/MDH superfamily. LDH family. As to quaternary structure, homotetramer.

The protein localises to the cytoplasm. The enzyme catalyses (S)-lactate + NAD(+) = pyruvate + NADH + H(+). The protein operates within fermentation; pyruvate fermentation to lactate; (S)-lactate from pyruvate: step 1/1. Interconverts simultaneously and stereospecifically pyruvate and lactate with concomitant interconversion of NADH and NAD(+). In Trachemys scripta elegans (Red-eared slider turtle), this protein is L-lactate dehydrogenase A chain (LDHA).